A 496-amino-acid polypeptide reads, in one-letter code: Iroquois-class homeodomain protein irx-4 (496 aa).

The segment at residues 141–203 is a DNA-binding region (homeobox; TALE-type); the sequence is GSTRRKNATR…NARRRLKKEN (63 aa). The tract at residues 203 to 236 is disordered; that stretch reads NKMTWPPRNKCSDEKRPYDEEEEEEEEEDSQKAT. Residues 221–231 show a composition bias toward acidic residues; that stretch reads DEEEEEEEEED.

It belongs to the TALE/IRO homeobox family. In terms of tissue distribution, expressed in the neural plate in overlapping patterns with other irx members, which all share an anterior border of expression. Broadly expressed in the tailbud rhombencephalon (hindbrain). Outside the nervous system and at tailbud stages, expressed in the developing otic vesicle, branchial arches and prospective heart region.

It localises to the nucleus. In terms of biological role, acts partially redundantly with other irx members in neural patterning. Required for formation of the posterior forebrain, midbrain, hindbrain, and to a lesser extent, spinal cord. Patterns the neuroectoderm in both the anterior/posterior and dorsal/ventral axes. Does not appear to play a role in pronephros kidney development. The sequence is that of Iroquois-class homeodomain protein irx-4 from Xenopus tropicalis (Western clawed frog).